The following is a 230-amino-acid chain: 7-cyano-7-deazaguanine synthase (230 aa).

Position 8-18 (8-18 (LSGGMDSAVVT)) interacts with ATP. Residues C186, C196, C199, and C202 each coordinate Zn(2+).

The protein belongs to the QueC family. It depends on Zn(2+) as a cofactor.

The catalysed reaction is 7-carboxy-7-deazaguanine + NH4(+) + ATP = 7-cyano-7-deazaguanine + ADP + phosphate + H2O + H(+). It functions in the pathway purine metabolism; 7-cyano-7-deazaguanine biosynthesis. Functionally, catalyzes the ATP-dependent conversion of 7-carboxy-7-deazaguanine (CDG) to 7-cyano-7-deazaguanine (preQ(0)). The chain is 7-cyano-7-deazaguanine synthase from Xylella fastidiosa (strain M23).